Consider the following 269-residue polypeptide: Tryptophan synthase alpha chain (269 aa).

Active-site proton acceptor residues include E49 and D60.

This sequence belongs to the TrpA family. Tetramer of two alpha and two beta chains.

It carries out the reaction (1S,2R)-1-C-(indol-3-yl)glycerol 3-phosphate + L-serine = D-glyceraldehyde 3-phosphate + L-tryptophan + H2O. It participates in amino-acid biosynthesis; L-tryptophan biosynthesis; L-tryptophan from chorismate: step 5/5. The alpha subunit is responsible for the aldol cleavage of indoleglycerol phosphate to indole and glyceraldehyde 3-phosphate. The sequence is that of Tryptophan synthase alpha chain from Pseudomonas putida (strain ATCC 47054 / DSM 6125 / CFBP 8728 / NCIMB 11950 / KT2440).